The primary structure comprises 185 residues: Ribose 1,5-bisphosphate phosphokinase PhnN (185 aa).

The protein belongs to the ribose 1,5-bisphosphokinase family.

The catalysed reaction is alpha-D-ribose 1,5-bisphosphate + ATP = 5-phospho-alpha-D-ribose 1-diphosphate + ADP. Its pathway is metabolic intermediate biosynthesis; 5-phospho-alpha-D-ribose 1-diphosphate biosynthesis; 5-phospho-alpha-D-ribose 1-diphosphate from D-ribose 5-phosphate (route II): step 3/3. Catalyzes the phosphorylation of ribose 1,5-bisphosphate to 5-phospho-D-ribosyl alpha-1-diphosphate (PRPP). The sequence is that of Ribose 1,5-bisphosphate phosphokinase PhnN from Escherichia coli (strain SMS-3-5 / SECEC).